The chain runs to 578 residues: MVRNVDDLDFHLPSHAQDMLDGLQRLRSQPKLADVTLLVGGRELPCHRGLLALSSPYFHAMFAGDFAESFSARVELRDVEPAVVGQLVDFVYTGRLTITQGNVEALTRTAARLHFPSVQKVCGRYLQQQLDAANCLGICEFGEQQGLLGVAAKAWAFLRENFEAVAREDEFLQLPRERLVTCLAGDLLQVQPEQSRLEALMRWVRHDPQARAAHLPELLSLVHLDAVPRPCVQQLLASEPLIQESEACRAALSQGHDGAPLALQQKLEEVLVVVGGQALEEEEAGEEPTPGLGNFAFYNSKAKRWMALPDFPDYHKWGFSLAALNNNIYVTGGSRGTKTDTWSTTQAWCFPLKEASWKPVAPMLKPRTNHASAALNGEIYVIGGTTLDVVEVESYDPYTDSWTPVSPALKYVSNFSAAGCRGRLYLVGSSACKYNALALQCYNPVTDAWSVIASPFLPKYLSSPRCAALHGELYLIGDNTKKVYVYDPGANLWQKVQSQHSLHENGALVPLGDALYVTGGRWQGMEGDYHVEMEAYDTVRDTWTRHGALPRLWLYHGASTVFLDVSKWTQPSGPTQEH.

Residues 33–100 (ADVTLLVGGR…VYTGRLTITQ (68 aa)) enclose the BTB domain. One can recognise a BACK domain in the interval 153–255 (KAWAFLRENF…EACRAALSQG (103 aa)). Kelch repeat units follow at residues 270–326 (VLVV…ALNN), 327–377 (NIYV…ALNG), 378–422 (EIYV…GCRG), 424–471 (LYLV…ALHG), 473–513 (LYLI…PLGD), and 514–563 (ALYV…TVFL).

This Homo sapiens (Human) protein is Kelch-like protein 30 (KLHL30).